The primary structure comprises 545 residues: Oligopeptide-binding protein OppA (545 aa).

An N-terminal signal peptide occupies residues 1–20 (MKKRWSIVTLMLIFTLVLSA). Cysteine 21 carries N-palmitoyl cysteine lipidation. A lipid anchor (S-diacylglycerol cysteine) is attached at cysteine 21. Residue threonine 470 is modified to Phosphothreonine.

This sequence belongs to the bacterial solute-binding protein 5 family. The complex is composed of two ATP-binding proteins (OppD and OppF), two transmembrane proteins (OppB and OppC) and a solute-binding protein (OppA). OppA interacts with FloT in detergent-resistant membranes (DRM). Colocalizes rarely with FloT membrane assemblies.

It localises to the cell membrane. The protein localises to the membrane raft. Its function is as follows. Part of the ABC transporter complex OppABCDF involved in the uptake of oligopeptides. Plays an important nutritional role. Binds peptides containing up to five amino acids residues regardless of their sequence, with highest affinity for tetra- and pentapeptides. Binds to the sporulation-promoting peptide PhrE (Ser-Arg-Asn-Val-Thr). Required for sporulation and genetic competence. This Bacillus subtilis (strain 168) protein is Oligopeptide-binding protein OppA.